Reading from the N-terminus, the 106-residue chain is Large ribosomal subunit protein eL42 (106 aa).

Belongs to the eukaryotic ribosomal protein eL42 family.

The protein localises to the cytoplasm. The sequence is that of Large ribosomal subunit protein eL42 (RPL44) from Trypanosoma brucei brucei.